Here is a 340-residue protein sequence, read N- to C-terminus: uncharacterized protein (340 aa).

A Radical SAM core domain is found at 58-307 (AALPFRYTVN…PSYREMLRER (250 aa)). Cys-72, Cys-76, and Cys-79 together coordinate [4Fe-4S] cluster. Transmembrane regions (helical) follow at residues 140-160 (YALM…LSIL) and 243-263 (QLLG…GLHL).

[4Fe-4S] cluster serves as cofactor.

It is found in the cell membrane. This is an uncharacterized protein from Mycobacterium tuberculosis (strain CDC 1551 / Oshkosh).